We begin with the raw amino-acid sequence, 301 residues long: NAD kinase 2 (301 aa).

Asp-77 functions as the Proton acceptor in the catalytic mechanism. NAD(+)-binding positions include 77-78 (DG), Arg-82, 151-152 (NE), Lys-162, Asp-181, and 192-197 (TAYAFS).

This sequence belongs to the NAD kinase family. A divalent metal cation serves as cofactor.

It is found in the cytoplasm. It carries out the reaction NAD(+) + ATP = ADP + NADP(+) + H(+). Functionally, involved in the regulation of the intracellular balance of NAD and NADP, and is a key enzyme in the biosynthesis of NADP. Catalyzes specifically the phosphorylation on 2'-hydroxyl of the adenosine moiety of NAD to yield NADP. The polypeptide is NAD kinase 2 (Streptomyces coelicolor (strain ATCC BAA-471 / A3(2) / M145)).